The chain runs to 244 residues: Small ribosomal subunit protein eS4 (244 aa).

Residues 1-14 (MANKGPRKHLKRLP) are compositionally biased toward basic residues. The disordered stretch occupies residues 1 to 36 (MANKGPRKHLKRLPAPKNWQISRKTNKYTTRPSAGP). The span at 19–32 (WQISRKTNKYTTRP) shows a compositional bias: polar residues. The S4 RNA-binding domain occupies 43-106 (LPLLLVLRDL…NESFLVVLDE (64 aa)).

Belongs to the eukaryotic ribosomal protein eS4 family.

The polypeptide is Small ribosomal subunit protein eS4 (Methanococcus aeolicus (strain ATCC BAA-1280 / DSM 17508 / OCM 812 / Nankai-3)).